The primary structure comprises 89 residues: Small ribosomal subunit protein uS14 (89 aa).

Belongs to the universal ribosomal protein uS14 family. Part of the 30S ribosomal subunit. Contacts proteins S3 and S10.

Binds 16S rRNA, required for the assembly of 30S particles and may also be responsible for determining the conformation of the 16S rRNA at the A site. The polypeptide is Small ribosomal subunit protein uS14 (Parabacteroides distasonis (strain ATCC 8503 / DSM 20701 / CIP 104284 / JCM 5825 / NCTC 11152)).